Here is a 213-residue protein sequence, read N- to C-terminus: NADH-quinone oxidoreductase subunit B 1 (213 aa).

Residues Cys82, Cys83, Cys148, and Cys177 each contribute to the [4Fe-4S] cluster site.

The protein belongs to the complex I 20 kDa subunit family. NDH-1 is composed of 14 different subunits. Subunits NuoB, C, D, E, F, and G constitute the peripheral sector of the complex. [4Fe-4S] cluster serves as cofactor.

The protein localises to the cell inner membrane. The enzyme catalyses a quinone + NADH + 5 H(+)(in) = a quinol + NAD(+) + 4 H(+)(out). NDH-1 shuttles electrons from NADH, via FMN and iron-sulfur (Fe-S) centers, to quinones in the respiratory chain. The immediate electron acceptor for the enzyme in this species is believed to be ubiquinone. Couples the redox reaction to proton translocation (for every two electrons transferred, four hydrogen ions are translocated across the cytoplasmic membrane), and thus conserves the redox energy in a proton gradient. This chain is NADH-quinone oxidoreductase subunit B 1, found in Koribacter versatilis (strain Ellin345).